The chain runs to 474 residues: HTH-type transcriptional regulator RamB (474 aa).

Positions 10 to 64 (VRQLRNERGFSQAALAQMLEISPSYLNQIEHDVRPLTVAVLLRITEVFGVDATFF) constitute an HTH cro/C1-type domain. The H-T-H motif DNA-binding region spans 21 to 40 (QAALAQMLEISPSYLNQIEH).

This sequence belongs to the short-chain fatty acyl-CoA assimilation regulator (ScfR) family.

Its function is as follows. Involved in the control of the glyoxylate cycle. RamB negatively controls the expression of icl expression during growth on acetate as the sole carbon source. This is HTH-type transcriptional regulator RamB from Mycobacterium tuberculosis (strain CDC 1551 / Oshkosh).